The sequence spans 261 residues: Pyridoxine 5'-phosphate synthase (261 aa).

Asn6 is a binding site for 3-amino-2-oxopropyl phosphate. 8-9 (DH) serves as a coordination point for 1-deoxy-D-xylulose 5-phosphate. Residue Arg17 coordinates 3-amino-2-oxopropyl phosphate. His42 serves as the catalytic Proton acceptor. Positions 44 and 49 each coordinate 1-deoxy-D-xylulose 5-phosphate. Catalysis depends on Glu69, which acts as the Proton acceptor. Position 99 (Thr99) interacts with 1-deoxy-D-xylulose 5-phosphate. His213 serves as the catalytic Proton donor. Residues Gly214 and 235–236 (GQ) each bind 3-amino-2-oxopropyl phosphate.

The protein belongs to the PNP synthase family. In terms of assembly, homooctamer; tetramer of dimers.

It is found in the cytoplasm. It catalyses the reaction 3-amino-2-oxopropyl phosphate + 1-deoxy-D-xylulose 5-phosphate = pyridoxine 5'-phosphate + phosphate + 2 H2O + H(+). It functions in the pathway cofactor biosynthesis; pyridoxine 5'-phosphate biosynthesis; pyridoxine 5'-phosphate from D-erythrose 4-phosphate: step 5/5. Catalyzes the complicated ring closure reaction between the two acyclic compounds 1-deoxy-D-xylulose-5-phosphate (DXP) and 3-amino-2-oxopropyl phosphate (1-amino-acetone-3-phosphate or AAP) to form pyridoxine 5'-phosphate (PNP) and inorganic phosphate. The chain is Pyridoxine 5'-phosphate synthase from Aliarcobacter butzleri (strain RM4018) (Arcobacter butzleri).